A 402-amino-acid chain; its full sequence is Argininosuccinate synthase (402 aa).

ATP contacts are provided by residues 9–17 and alanine 36; that span reads AYSGGLDTS. Tyrosine 87 and serine 92 together coordinate L-citrulline. Glycine 117 serves as a coordination point for ATP. L-aspartate is bound by residues threonine 119, asparagine 123, and aspartate 124. Asparagine 123 contributes to the L-citrulline binding site. L-citrulline is bound by residues arginine 127, serine 176, serine 185, glutamate 261, and tyrosine 273.

This sequence belongs to the argininosuccinate synthase family. Type 1 subfamily. As to quaternary structure, homotetramer.

The protein resides in the cytoplasm. The catalysed reaction is L-citrulline + L-aspartate + ATP = 2-(N(omega)-L-arginino)succinate + AMP + diphosphate + H(+). It functions in the pathway amino-acid biosynthesis; L-arginine biosynthesis; L-arginine from L-ornithine and carbamoyl phosphate: step 2/3. This chain is Argininosuccinate synthase, found in Deinococcus radiodurans (strain ATCC 13939 / DSM 20539 / JCM 16871 / CCUG 27074 / LMG 4051 / NBRC 15346 / NCIMB 9279 / VKM B-1422 / R1).